Reading from the N-terminus, the 213-residue chain is ER lumen protein-retaining receptor (213 aa).

Residues 1-2 (MN) lie on the Lumenal side of the membrane. A helical membrane pass occupies residues 3–21 (IFRITADLAHAVAIVILLL). The Cytoplasmic portion of the chain corresponds to 22-35 (KIWKSRSCEGISGR). Residues 36–53 (SQILFAVTFFTRYLDLFT) form a helical membrane-spanning segment. The Lumenal segment spans residues 54–61 (SFYSLYNT). A helical transmembrane segment spans residues 62–80 (VMKVLFLAGSIGTVYLMWV). Residues 81–96 (KFKATYDRNNDTFRIE) are Cytoplasmic-facing. Residues 97–110 (FLVIPSIILALIIN) traverse the membrane as a helical segment. Topologically, residues 111 to 117 (HEFMFME) are lumenal. Residues 118–137 (VMWTFSIYLEAVAIMPQLFM) traverse the membrane as a helical segment. Over 138 to 149 (LSRTGNAETITA) the chain is Cytoplasmic. Residues 150 to 168 (HYLFALGSYRFLYIFNWVY) traverse the membrane as a helical segment. Residues 169-178 (RYYTESFFDP) are Lumenal-facing. Residues 179-199 (IAVVAGIVQTVLYADFFYLYI) form a helical membrane-spanning segment. Topologically, residues 200–213 (TRVIQSNRQFEMSA) are cytoplasmic.

The protein belongs to the ERD2 family.

The protein resides in the endoplasmic reticulum membrane. Functionally, required for the retention of luminal endoplasmic reticulum proteins. Determines the specificity of the luminal ER protein retention system. Also required for normal vesicular traffic through the Golgi. The sequence is that of ER lumen protein-retaining receptor (erd-2.1) from Caenorhabditis briggsae.